Consider the following 237-residue polypeptide: tRNA1(Val) (adenine(37)-N6)-methyltransferase (237 aa).

This sequence belongs to the methyltransferase superfamily. tRNA (adenine-N(6)-)-methyltransferase family.

The protein resides in the cytoplasm. The catalysed reaction is adenosine(37) in tRNA1(Val) + S-adenosyl-L-methionine = N(6)-methyladenosine(37) in tRNA1(Val) + S-adenosyl-L-homocysteine + H(+). Functionally, specifically methylates the adenine in position 37 of tRNA(1)(Val) (anticodon cmo5UAC). The protein is tRNA1(Val) (adenine(37)-N6)-methyltransferase of Parabacteroides distasonis (strain ATCC 8503 / DSM 20701 / CIP 104284 / JCM 5825 / NCTC 11152).